Here is a 317-residue protein sequence, read N- to C-terminus: Glucokinase (317 aa).

This sequence belongs to the ROK (NagC/XylR) family. In terms of assembly, homodimer. Requires a divalent metal cation as cofactor.

It catalyses the reaction D-glucose + ATP = D-glucose 6-phosphate + ADP + H(+). Functionally, catalyzes the phosphorylation of D-glucose to D-glucose 6-phosphate using ATP as the phosphate donor. Can also phosphorylate 2-deoxyglucose, with lower efficiency. ITP can also serve as a phosphoryl donor. In Thermotoga maritima (strain ATCC 43589 / DSM 3109 / JCM 10099 / NBRC 100826 / MSB8), this protein is Glucokinase.